A 165-amino-acid polypeptide reads, in one-letter code: Ribosome maturation factor RimM (165 aa).

One can recognise a PRC barrel domain in the interval 94-165 (EDEFYIADLN…YGILNYKREV (72 aa)).

Belongs to the RimM family. As to quaternary structure, binds ribosomal protein uS19.

The protein localises to the cytoplasm. In terms of biological role, an accessory protein needed during the final step in the assembly of 30S ribosomal subunit, possibly for assembly of the head region. Essential for efficient processing of 16S rRNA. May be needed both before and after RbfA during the maturation of 16S rRNA. It has affinity for free ribosomal 30S subunits but not for 70S ribosomes. The polypeptide is Ribosome maturation factor RimM (Rickettsia canadensis (strain McKiel)).